The primary structure comprises 98 residues: uncharacterized protein (98 aa).

Positions 58 to 98 are disordered; it reads ARFPVEDTAGGLLRTGGHRPQISDEEVSKRHHEQSHGQEDH.

This is an uncharacterized protein from Saccharomyces cerevisiae (strain ATCC 204508 / S288c) (Baker's yeast).